A 437-amino-acid chain; its full sequence is Chaperone SurA (437 aa).

Residues 1–22 (MKNWKFPLISTLLLLLTINVHA) form the signal peptide. PpiC domains follow at residues 173 to 274 (TVQY…KIDD) and 283 to 383 (VTEV…EVLE).

Its subcellular location is the periplasm. It catalyses the reaction [protein]-peptidylproline (omega=180) = [protein]-peptidylproline (omega=0). Its function is as follows. Chaperone involved in the correct folding and assembly of outer membrane proteins. Recognizes specific patterns of aromatic residues and the orientation of their side chains, which are found more frequently in integral outer membrane proteins. May act in both early periplasmic and late outer membrane-associated steps of protein maturation. In Aliivibrio fischeri (strain ATCC 700601 / ES114) (Vibrio fischeri), this protein is Chaperone SurA.